A 247-amino-acid polypeptide reads, in one-letter code: Orotidine 5'-phosphate decarboxylase (247 aa).

Substrate is bound by residues Asp21, Lys43, 70-79, Thr129, Arg190, Gln199, Gly219, and Arg220; that span reads DMKFHDIPNT. Lys72 acts as the Proton donor in catalysis.

Belongs to the OMP decarboxylase family. Type 1 subfamily. As to quaternary structure, homodimer.

It carries out the reaction orotidine 5'-phosphate + H(+) = UMP + CO2. It functions in the pathway pyrimidine metabolism; UMP biosynthesis via de novo pathway; UMP from orotate: step 2/2. Functionally, catalyzes the decarboxylation of orotidine 5'-monophosphate (OMP) to uridine 5'-monophosphate (UMP). This is Orotidine 5'-phosphate decarboxylase from Chromobacterium violaceum (strain ATCC 12472 / DSM 30191 / JCM 1249 / CCUG 213 / NBRC 12614 / NCIMB 9131 / NCTC 9757 / MK).